The following is a 125-amino-acid chain: Large-conductance mechanosensitive channel (125 aa).

3 consecutive transmembrane segments (helical) span residues Val-19 to Ile-39, Leu-42 to Ala-62, and Gly-67 to Val-87.

Belongs to the MscL family. As to quaternary structure, homopentamer.

The protein resides in the cell membrane. Functionally, channel that opens in response to stretch forces in the membrane lipid bilayer. May participate in the regulation of osmotic pressure changes within the cell. This is Large-conductance mechanosensitive channel from Limosilactobacillus fermentum (strain NBRC 3956 / LMG 18251) (Lactobacillus fermentum).